Reading from the N-terminus, the 327-residue chain is MPHLAELVAKARTAIEEAQDVAALENVRVEYLGKKGHLTLQMTSLRELPAEERPAAGAVINQAKQDVQDALNARKQTLESAELNARLAQETIDVSLPGRTIENGGLHPVTRTIDRIETFFGELGFSVVTGPEIEDDYHNFDALNIPGHHPARADHDTFWFDAKRLLRTQTSGVQIRTMEKQQPPIRIIAPGRVYRNDYDQTHTPMFHQMEGLIVDKDISFTNLKGTLHDFLRNFFEEDLQVRFRPSYFPFTEPSAEVDVMGKNGKWLEVLGCGMVHPNVLRNVGIDPEVYSGFAFGMGMERLTMLRYGVTDLRAFFENDLRFLKQFK.

Residue Glu252 participates in Mg(2+) binding.

Belongs to the class-II aminoacyl-tRNA synthetase family. Phe-tRNA synthetase alpha subunit type 1 subfamily. Tetramer of two alpha and two beta subunits. It depends on Mg(2+) as a cofactor.

Its subcellular location is the cytoplasm. The catalysed reaction is tRNA(Phe) + L-phenylalanine + ATP = L-phenylalanyl-tRNA(Phe) + AMP + diphosphate + H(+). This is Phenylalanine--tRNA ligase alpha subunit from Pectobacterium atrosepticum (strain SCRI 1043 / ATCC BAA-672) (Erwinia carotovora subsp. atroseptica).